A 157-amino-acid polypeptide reads, in one-letter code: UPF0303 protein NT01EI_1570 (157 aa).

The protein belongs to the UPF0303 family.

The protein is UPF0303 protein NT01EI_1570 of Edwardsiella ictaluri (strain 93-146).